The following is a 109-amino-acid chain: Mitochondrial pyruvate carrier 1 (109 aa).

An N-acetylalanine modification is found at A2. Residues 2–20 are Mitochondrial matrix-facing; sequence AGALVRKAADYVRSKDFRD. The helical transmembrane segment at 21–41 threads the bilayer; it reads YLMSTHFWGPVANWGLPIAAI. The Mother cell cytoplasmic portion of the chain corresponds to 42–52; it reads NDMKKSPEIIS. Residues 53-71 traverse the membrane as a helical segment; that stretch reads GRMTFALCCYSLTFMRFAY. Residue K72 is modified to N6-acetyllysine. Residues 72–109 are Mitochondrial matrix-facing; the sequence is KVQPRNWLLFACHATNEVAQLIQGGRLIRHEMSKKASA.

In terms of assembly, homodimer. Forms heterodimer with MPC2. The heterodimer is the more stable and dominant form.

The protein resides in the mitochondrion inner membrane. The enzyme catalyses pyruvate(out) + H(+)(out) = pyruvate(in) + H(+)(in). Its function is as follows. Mediates the uptake of pyruvate into mitochondria. This is Mitochondrial pyruvate carrier 1 (MPC1) from Bos taurus (Bovine).